Reading from the N-terminus, the 84-residue chain is Large ribosomal subunit protein bL27 (84 aa).

Positions 1–21 are disordered; sequence MAHKKGGGSTKNGRDSNPKYL.

The protein belongs to the bacterial ribosomal protein bL27 family.

In Chlorobium limicola (strain DSM 245 / NBRC 103803 / 6330), this protein is Large ribosomal subunit protein bL27.